Reading from the N-terminus, the 736-residue chain is Protein kinase C epsilon type (736 aa).

A C2 domain is found at 1-117 (MVVFNGLLKI…NGSRHFEDWI (117 aa)). Ser62 carries the post-translational modification Phosphoserine. The segment at 169 to 220 (GHKFMATYLRQPTYCSHCRDFIWGVIGKQGYQCQVCTCVVHKRCHELIITKV) adopts a Phorbol-ester/DAG-type 1 zinc-finger fold. Thr228 carries the phosphothreonine modification. Ser234 carries the post-translational modification Phosphoserine. Residues 242 to 292 (PHKFGIHNYKVPTFCDHCGSLLWGLLRQGLQCKVCKMNVHRRCETNVAPNC) form a Phorbol-ester/DAG-type 2 zinc finger. Thr309 is subject to Phosphothreonine. A disordered region spans residues 310–356 (PDKITNSGQRRKKLIGGAESPQPTSGSSPSEEDRSKSAPTSPCDQEL). 3 positions are modified to phosphoserine: Ser316, Ser329, and Ser337. Ser346 is subject to Phosphoserine; by GSK3-beta. Thr349 is modified (phosphothreonine). Ser350 is subject to Phosphoserine; by MAPK11 and MAPK14. Ser368 is modified (phosphoserine; by autocatalysis). Residues 369-397 (FDNRGEEHRAASSTDGQLGSPENGEVRQG) are disordered. Ser388 bears the Phosphoserine mark. In terms of domain architecture, Protein kinase spans 407–667 (FNFIKVLGKG…EDAIKQHPFF (261 aa)). ATP is bound by residues 413-421 (LGKGSFGKV) and Lys436. The active-site Proton acceptor is the Asp531. Residue Thr565 is modified to Phosphothreonine; by PDPK1. In terms of domain architecture, AGC-kinase C-terminal spans 668-736 (KEIDWVLLEQ…FSYFGEDLMP (69 aa)). Thr702 bears the Phosphothreonine mark. Thr709 carries the post-translational modification Phosphothreonine; by autocatalysis. Ser728 carries the post-translational modification Phosphoserine; by autocatalysis.

The protein belongs to the protein kinase superfamily. AGC Ser/Thr protein kinase family. PKC subfamily. In terms of assembly, forms a ternary complex with TRIM63 and RACK1/GN2BL1. Can form a complex with PDLIM5 and N-type calcium channel. Interacts with COPB1. Interacts with DGKQ. Interacts with STAT3. Interacts with YWHAB. Interacts with HSP90AB1; promotes functional activation in a heat shock-dependent manner. Interacts (via phorbol-ester/DAG-type 2 domain) with PRPH and VIM. Interacts with NLRP5/MATER. In terms of processing, phosphorylation on Thr-565 by PDPK1 triggers autophosphorylation on Ser-728. Phosphorylation in the hinge domain at Ser-350 by MAPK11 or MAPK14, Ser-346 by GSK3B and Ser-368 by autophosphorylation is required for interaction with YWHAB. In response to growth factors, phosphorylated at Thr-702 and Ser-728 by the mTORC2 complex, promoting autophosphorylation and activation of PRKCE.

The protein resides in the cytoplasm. It localises to the cytoskeleton. Its subcellular location is the cell membrane. It is found in the perinuclear region. The protein localises to the nucleus. The catalysed reaction is L-seryl-[protein] + ATP = O-phospho-L-seryl-[protein] + ADP + H(+). It catalyses the reaction L-threonyl-[protein] + ATP = O-phospho-L-threonyl-[protein] + ADP + H(+). Novel PKCs (PRKCD, PRKCE, PRKCH and PRKCQ) are calcium-insensitive, but activated by diacylglycerol (DAG) and phosphatidylserine. Three specific sites; Thr-565 (activation loop of the kinase domain), Thr-709 (turn motif) and Ser-728 (hydrophobic region), need to be phosphorylated for its full activation. Its function is as follows. Calcium-independent, phospholipid- and diacylglycerol (DAG)-dependent serine/threonine-protein kinase that plays essential roles in the regulation of multiple cellular processes linked to cytoskeletal proteins, such as cell adhesion, motility, migration and cell cycle, functions in neuron growth and ion channel regulation, and is involved in immune response, cancer cell invasion and regulation of apoptosis. Mediates cell adhesion to the extracellular matrix via integrin-dependent signaling, by mediating angiotensin-2-induced activation of integrin beta-1 (ITGB1) in cardiac fibroblasts. Phosphorylates MARCKS, which phosphorylates and activates PTK2/FAK, leading to the spread of cardiomyocytes. Involved in the control of the directional transport of ITGB1 in mesenchymal cells by phosphorylating vimentin (VIM), an intermediate filament (IF) protein. In epithelial cells, associates with and phosphorylates keratin-8 (KRT8), which induces targeting of desmoplakin at desmosomes and regulates cell-cell contact. Phosphorylates IQGAP1, which binds to CDC42, mediating epithelial cell-cell detachment prior to migration. During cytokinesis, forms a complex with YWHAB, which is crucial for daughter cell separation, and facilitates abscission by a mechanism which may implicate the regulation of RHOA. In cardiac myocytes, regulates myofilament function and excitation coupling at the Z-lines, where it is indirectly associated with F-actin via interaction with COPB1. During endothelin-induced cardiomyocyte hypertrophy, mediates activation of PTK2/FAK, which is critical for cardiomyocyte survival and regulation of sarcomere length. Plays a role in the pathogenesis of dilated cardiomyopathy via persistent phosphorylation of troponin I (TNNI3). Involved in nerve growth factor (NFG)-induced neurite outgrowth and neuron morphological change independently of its kinase activity, by inhibition of RHOA pathway, activation of CDC42 and cytoskeletal rearrangement. May be involved in presynaptic facilitation by mediating phorbol ester-induced synaptic potentiation. Phosphorylates gamma-aminobutyric acid receptor subunit gamma-2 (GABRG2), which reduces the response of GABA receptors to ethanol and benzodiazepines and may mediate acute tolerance to the intoxicating effects of ethanol. Upon PMA treatment, phosphorylates the capsaicin- and heat-activated cation channel TRPV1, which is required for bradykinin-induced sensitization of the heat response in nociceptive neurons. Is able to form a complex with PDLIM5 and N-type calcium channel, and may enhance channel activities and potentiates fast synaptic transmission by phosphorylating the pore-forming alpha subunit CACNA1B (CaV2.2). Downstream of TLR4, plays an important role in the lipopolysaccharide (LPS)-induced immune response by phosphorylating and activating TICAM2/TRAM, which in turn activates the transcription factor IRF3 and subsequent cytokines production. In differentiating erythroid progenitors, is regulated by EPO and controls the protection against the TNFSF10/TRAIL-mediated apoptosis, via BCL2. May be involved in the regulation of the insulin-induced phosphorylation and activation of AKT1. Phosphorylates NLRP5/MATER and may thereby modulate AKT pathway activation in cumulus cells. Phosphorylates and activates LRRK1, which phosphorylates RAB proteins involved in intracellular trafficking. The sequence is that of Protein kinase C epsilon type (PRKCE) from Oryctolagus cuniculus (Rabbit).